The following is a 128-amino-acid chain: MAYRKLGRTSSQRKAMLRDLTTDLLINESIVTTEARAKEIRKTVEKMITLGKRGDLHARRQAAAYVRNEIASESYDEATDKYTSTTALQKLFSEIAPRYAERNGGYTRILKTEPRRGDAAPMAIIELV.

The protein belongs to the bacterial ribosomal protein bL17 family. Part of the 50S ribosomal subunit. Contacts protein L32.

The chain is Large ribosomal subunit protein bL17 from Streptococcus equi subsp. zooepidemicus (strain H70).